Reading from the N-terminus, the 220-residue chain is Ras-related protein Rab-11B (220 aa).

18 to 25 (GDSGVGKS) lines the GTP pocket. The Effector region signature appears at 40–48 (KLSTIGVEF). GTP is bound by residues 66 to 70 (DTAGQ) and 124 to 127 (NKSD). S-geranylgeranyl cysteine attachment occurs at residues C219 and C220.

This sequence belongs to the small GTPase superfamily. Rab family.

It localises to the cell membrane. This is Ras-related protein Rab-11B (rab11B) from Dictyostelium discoideum (Social amoeba).